We begin with the raw amino-acid sequence, 288 residues long: Protoheme IX farnesyltransferase (288 aa).

Helical transmembrane passes span 16 to 36 (VWSL…NRFT), 37 to 57 (LTNI…SMGA), 88 to 108 (VKGL…LLFF), 111 to 131 (YLAA…YSYL), 138 to 158 (WNII…WYTV), 162 to 182 (FSVL…IHVW), 210 to 230 (AICI…PVFF), 236 to 256 (TYMI…VLFV), and 265 to 285 (LKLF…VLIF).

This sequence belongs to the UbiA prenyltransferase family. Protoheme IX farnesyltransferase subfamily.

Its subcellular location is the cell membrane. The catalysed reaction is heme b + (2E,6E)-farnesyl diphosphate + H2O = Fe(II)-heme o + diphosphate. It functions in the pathway porphyrin-containing compound metabolism; heme O biosynthesis; heme O from protoheme: step 1/1. Functionally, converts heme B (protoheme IX) to heme O by substitution of the vinyl group on carbon 2 of heme B porphyrin ring with a hydroxyethyl farnesyl side group. The chain is Protoheme IX farnesyltransferase from Thermoplasma volcanium (strain ATCC 51530 / DSM 4299 / JCM 9571 / NBRC 15438 / GSS1).